The sequence spans 459 residues: Putative flavin-containing monooxygenase 2 (459 aa).

FAD-binding positions include 17–21 (GAGVS), glutamate 38, and 46–47 (VW). 217–220 (SAID) provides a ligand contact to NADP(+).

This sequence belongs to the FMO family. FAD serves as cofactor.

The chain is Putative flavin-containing monooxygenase 2 (FMO2) from Arabidopsis thaliana (Mouse-ear cress).